We begin with the raw amino-acid sequence, 423 residues long: Acyl-coenzyme A diphosphatase FITM2 (423 aa).

The segment at 1-47 is disordered; that stretch reads MATKRRPLRPNLGGTAGSPSSSGSNMNFRPGGPDITRSEARGTRPTA. Residues 1 to 75 are Cytoplasmic-facing; it reads MATKRRPLRP…KTIFFNTDLK (75 aa). The helical transmembrane segment at 76-96 threads the bilayer; the sequence is VALYLGSLFVISVIGDFVPFP. Topologically, residues 97–113 are lumenal; sequence KTYFARSDNLFNQYFVK. Residues 114–134 traverse the membrane as a helical segment; the sequence is IGWGWTLLFVVPFLVLSAYTI. Residues 135–146 are Cytoplasmic-facing; the sequence is TCGDHKRMLRHH. The helical transmembrane segment at 147–167 threads the bilayer; sequence FPRIVIATFFWFFWTKLFNVV. Residues 168-191 lie on the Lumenal side of the membrane; the sequence is ENSYGRCTTKGYATKSSCLKAGHL. Residues 192–212 traverse the membrane as a helical segment; the sequence is WKGFDISGHAFILIHSSLVLI. The active site involves His-200. Residues 213 to 270 lie on the Cytoplasmic side of the membrane; sequence EEARPIIRWETIKEHIRNERHNRSTAENSGTNPLRTLNEEQMRSLQFLYKRLTPIIRT. The chain crosses the membrane as a helical span at residues 271–291; sequence LFIGMAALQLLWDIMLVGTML. The Lumenal segment spans residues 292-299; sequence YYHRMIEK. His-294 is a catalytic residue. The chain crosses the membrane as a helical span at residues 300–320; it reads VISGIIAILTWYFTYRFWYPT. At 321–423 the chain is on the cytoplasmic side; that stretch reads PGLLPEAPGN…RDREQQTLES (103 aa). Disordered stretches follow at residues 344-381 and 400-423; these read FKRPSHLSTGAATTSSGSNSSRTNLNGKAATTGVPRDQ and AAANLLMSDQQKRERDREQQTLES. Residues 351–367 are compositionally biased toward low complexity; the sequence is STGAATTSSGSNSSRTN. Residues 409–423 are compositionally biased toward basic and acidic residues; sequence QQKRERDREQQTLES.

It belongs to the FIT family. FIT2 subfamily.

The protein localises to the endoplasmic reticulum membrane. It carries out the reaction an acyl-CoA + H2O = an acyl-4'-phosphopantetheine + adenosine 3',5'-bisphosphate + 2 H(+). In terms of biological role, fatty acyl-coenzyme A (CoA) diphosphatase that hydrolyzes fatty acyl-CoA to yield acyl-4'-phosphopantetheine and adenosine 3',5'-bisphosphate. Preferentially hydrolyzes unsaturated long-chain acyl-CoA substrates in the endoplasmic reticulum (ER) lumen. This catalytic activity is required for maintaining ER structure and for lipid droplets (LDs) biogenesis, which are lipid storage organelles involved in maintaining lipid and energy homeostasis. May directly bind to diacylglycerol (DAGs) and triacylglycerol, which is also important for LD biogenesis. May support directional budding of nacent LDs from the ER into the cytosol by reducing DAG levels at sites of LD formation. Plays a role in the regulation of cell morphology and cytoskeletal organization. Required for correct morphology of nociceptive multi-dendritic sensory neurons. Required for normal mechanical amplification in hearing. The chain is Acyl-coenzyme A diphosphatase FITM2 from Drosophila melanogaster (Fruit fly).